The chain runs to 555 residues: Formate--tetrahydrofolate ligase (555 aa).

65 to 72 (TPAGEGKS) provides a ligand contact to ATP.

Belongs to the formate--tetrahydrofolate ligase family.

It catalyses the reaction (6S)-5,6,7,8-tetrahydrofolate + formate + ATP = (6R)-10-formyltetrahydrofolate + ADP + phosphate. It participates in one-carbon metabolism; tetrahydrofolate interconversion. This Staphylococcus aureus (strain USA300) protein is Formate--tetrahydrofolate ligase.